The sequence spans 198 residues: Imidazoleglycerol-phosphate dehydratase (198 aa).

This sequence belongs to the imidazoleglycerol-phosphate dehydratase family.

Its subcellular location is the cytoplasm. It catalyses the reaction D-erythro-1-(imidazol-4-yl)glycerol 3-phosphate = 3-(imidazol-4-yl)-2-oxopropyl phosphate + H2O. Its pathway is amino-acid biosynthesis; L-histidine biosynthesis; L-histidine from 5-phospho-alpha-D-ribose 1-diphosphate: step 6/9. The protein is Imidazoleglycerol-phosphate dehydratase of Gluconobacter oxydans (strain 621H) (Gluconobacter suboxydans).